Reading from the N-terminus, the 360-residue chain is Photosystem II protein D1 (360 aa).

Helical transmembrane passes span Tyr-30 to Ala-47, His-119 to Leu-134, and Trp-143 to Ala-157. Chlorophyll a is bound at residue His-119. Tyr-127 is a pheophytin a binding site. [CaMn4O5] cluster is bound by residues Asp-171 and Glu-190. Residues Phe-198–Leu-219 form a helical membrane-spanning segment. Residue His-199 coordinates chlorophyll a. A quinone contacts are provided by residues His-216 and Ser-265 to Phe-266. His-216 contacts Fe cation. His-273 contributes to the Fe cation binding site. Residues Phe-275–Met-289 traverse the membrane as a helical segment. The [CaMn4O5] cluster site is built by His-333, Glu-334, Asp-343, and Ala-345. Residues Ala-346–Gly-360 constitute a propeptide that is removed on maturation.

It belongs to the reaction center PufL/M/PsbA/D family. As to quaternary structure, PSII is composed of 1 copy each of membrane proteins PsbA, PsbB, PsbC, PsbD, PsbE, PsbF, PsbH, PsbI, PsbJ, PsbK, PsbL, PsbM, PsbT, PsbX, PsbY, Psb30/Ycf12, peripheral proteins PsbO, CyanoQ (PsbQ), PsbU, PsbV and a large number of cofactors. It forms dimeric complexes. The D1/D2 heterodimer binds P680, chlorophylls that are the primary electron donor of PSII, and subsequent electron acceptors. It shares a non-heme iron and each subunit binds pheophytin, quinone, additional chlorophylls, carotenoids and lipids. D1 provides most of the ligands for the Mn4-Ca-O5 cluster of the oxygen-evolving complex (OEC). There is also a Cl(-1) ion associated with D1 and D2, which is required for oxygen evolution. The PSII complex binds additional chlorophylls, carotenoids and specific lipids. serves as cofactor. Tyr-162 forms a radical intermediate that is referred to as redox-active TyrZ, YZ or Y-Z. Post-translationally, C-terminally processed by CtpA; processing is essential to allow assembly of the oxygen-evolving complex and thus photosynthetic growth.

Its subcellular location is the cellular thylakoid membrane. It carries out the reaction 2 a plastoquinone + 4 hnu + 2 H2O = 2 a plastoquinol + O2. Its function is as follows. Photosystem II (PSII) is a light-driven water:plastoquinone oxidoreductase that uses light energy to abstract electrons from H(2)O, generating O(2) and a proton gradient subsequently used for ATP formation. It consists of a core antenna complex that captures photons, and an electron transfer chain that converts photonic excitation into a charge separation. The D1/D2 (PsbA/PsbD) reaction center heterodimer binds P680, the primary electron donor of PSII as well as several subsequent electron acceptors. This is Photosystem II protein D1 from Prochlorococcus marinus (strain MIT 9312).